The primary structure comprises 975 residues: Importin-11 (975 aa).

Methionine 1 bears the N-acetylmethionine mark. One can recognise an Importin N-terminal domain in the interval alanine 28 to glutamate 100. HEAT repeat units lie at residues arginine 123–serine 160, glutamate 209–glutamine 248, valine 318–phenylalanine 356, glutamine 422–leucine 459, tryptophan 473–lysine 509, aspartate 511–phenylalanine 548, proline 555–methionine 593, glycine 600–alanine 636, asparagine 640–asparagine 677, proline 683–glutamate 720, glutamate 743–proline 764, glutamine 765–serine 804, glutamine 819–alanine 849, leucine 850–glutamate 887, and methionine 957–glycine 974. Phosphoserine is present on serine 343.

This sequence belongs to the importin beta family. As to quaternary structure, interacts with UBE2E3 and RPL12.

It is found in the cytoplasm. It localises to the nucleus. In terms of biological role, functions in nuclear protein import as nuclear transport receptor. Serves as receptor for nuclear localization signals (NLS) in cargo substrates. Is thought to mediate docking of the importin/substrate complex to the nuclear pore complex (NPC) through binding to nucleoporin and the complex is subsequently translocated through the pore by an energy requiring, Ran-dependent mechanism. At the nucleoplasmic side of the NPC, Ran binds to the importin, the importin/substrate complex dissociates and importin is re-exported from the nucleus to the cytoplasm where GTP hydrolysis releases Ran. The directionality of nuclear import is thought to be conferred by an asymmetric distribution of the GTP- and GDP-bound forms of Ran between the cytoplasm and nucleus. Mediates the nuclear import of UBE2E3, and of RPL12. This is Importin-11 (IPO11) from Homo sapiens (Human).